A 259-amino-acid polypeptide reads, in one-letter code: MELTIFQVDAFADSPFQGNPAAVCPLDAWLDDERLQAIAEENNLSETAFVVGRDGDYRLRWFTPQVEVDLCGHATLATAWVLIHKLDDASPVLRFATRSGELSVRREGDSLAMDFPAKRPEPCATPDGLLEALGIAEAEVLKTDDYLVVVDDEKTIAALAPDFARLKGLPCRGVAVTARSQRFDFVSRWFGPNVGVNEDPVTGSAHTSLAPYWAQRLGKTRLSAEQGGARKGRLECDVRGERVVISGKAALYMSGTLHL.

The active site involves Glu46.

It belongs to the PhzF family.

This is an uncharacterized protein from Pseudomonas aeruginosa (strain ATCC 15692 / DSM 22644 / CIP 104116 / JCM 14847 / LMG 12228 / 1C / PRS 101 / PAO1).